The primary structure comprises 518 residues: Metal transporter Nramp1 (518 aa).

12 consecutive transmembrane segments (helical) span residues 35–55 (FLSH…PGNM), 68–88 (ELLW…SLSA), 107–127 (PVWV…ASDI), 131–151 (IGTG…GVLI), 172–192 (VVVA…MSIV), 218–238 (IALL…ALVL), 255–275 (FFLF…IAII), 315–337 (SATV…GTYA), 357–377 (LMTR…GGSS), 382–402 (LIVI…IPLL), 418–438 (IYIV…NIYF), and 458–478 (VLIG…VIYL).

It belongs to the NRAMP (TC 2.A.55) family.

It is found in the membrane. Probable metal transporter that may participate in the control of iron homeostasis. The polypeptide is Metal transporter Nramp1 (NRAMP1) (Oryza sativa subsp. japonica (Rice)).